Reading from the N-terminus, the 100-residue chain is Large ribosomal subunit protein uL23 (100 aa).

This sequence belongs to the universal ribosomal protein uL23 family. As to quaternary structure, part of the 50S ribosomal subunit. Contacts protein L29, and trigger factor when it is bound to the ribosome.

One of the early assembly proteins it binds 23S rRNA. One of the proteins that surrounds the polypeptide exit tunnel on the outside of the ribosome. Forms the main docking site for trigger factor binding to the ribosome. In Prochlorococcus marinus (strain MIT 9301), this protein is Large ribosomal subunit protein uL23.